The following is a 497-amino-acid chain: L-arabinose isomerase (497 aa).

Mn(2+) contacts are provided by Glu-306, Glu-333, His-349, and His-448.

The protein belongs to the arabinose isomerase family. It depends on Mn(2+) as a cofactor.

The catalysed reaction is beta-L-arabinopyranose = L-ribulose. Its pathway is carbohydrate degradation; L-arabinose degradation via L-ribulose; D-xylulose 5-phosphate from L-arabinose (bacterial route): step 1/3. In terms of biological role, catalyzes the conversion of L-arabinose to L-ribulose. The polypeptide is L-arabinose isomerase (Vibrio parahaemolyticus serotype O3:K6 (strain RIMD 2210633)).